Here is a 219-residue protein sequence, read N- to C-terminus: 7-cyano-7-deazaguanine synthase (219 aa).

11–21 lines the ATP pocket; sequence FSGGQDSTTCL. Zn(2+) is bound by residues cysteine 188, cysteine 196, cysteine 199, and cysteine 202.

It belongs to the QueC family. Zn(2+) serves as cofactor.

It carries out the reaction 7-carboxy-7-deazaguanine + NH4(+) + ATP = 7-cyano-7-deazaguanine + ADP + phosphate + H2O + H(+). It participates in purine metabolism; 7-cyano-7-deazaguanine biosynthesis. Catalyzes the ATP-dependent conversion of 7-carboxy-7-deazaguanine (CDG) to 7-cyano-7-deazaguanine (preQ(0)). In Glaesserella parasuis serovar 5 (strain SH0165) (Haemophilus parasuis), this protein is 7-cyano-7-deazaguanine synthase.